A 214-amino-acid chain; its full sequence is External core antigen (214 aa).

The first 19 residues, 1-19, serve as a signal peptide directing secretion; the sequence is MQLFHLCLIISCTCPTVQA. Positions 25-27 are HBEAG; sequence GWL. The interval 165–214 is disordered; it reads NAPILSTLPETTVVRRRDRGRSPRRRTPSPRRRRSQSPRRRRSQSRESQC. Positions 178 to 207 are enriched in basic residues; that stretch reads VRRRDRGRSPRRRTPSPRRRRSQSPRRRRS. A 1; half-length repeat occupies 186-192; that stretch reads SPRRRTP. A 3 X 8 AA repeats of S-P-R-R-R-R-S-Q region spans residues 186–208; that stretch reads SPRRRTPSPRRRRSQSPRRRRSQ. The propeptide occupies 186–214; sequence SPRRRTPSPRRRRSQSPRRRRSQSRESQC. 2 consecutive repeat copies span residues 193–200 and 201–208.

Belongs to the orthohepadnavirus precore antigen family. Homodimerizes. In terms of processing, phosphorylated. Post-translationally, cleaved by host furin.

It localises to the secreted. It is found in the host nucleus. Its function is as follows. May regulate immune response to the intracellular capsid in acting as a T-cell tolerogen, by having an immunoregulatory effect which prevents destruction of infected cells by cytotoxic T-cells. This immune regulation may predispose to chronicity during perinatal infections and prevent severe liver injury during adult infections. This Homo sapiens (Human) protein is External core antigen.